A 227-amino-acid polypeptide reads, in one-letter code: Cytochrome c oxidase subunit 2 (227 aa).

The Mitochondrial intermembrane segment spans residues 1 to 14; sequence MAYPMQLGLQDATS. Residues 15–45 form a helical membrane-spanning segment; the sequence is PIMEELTDFHDHTLMIVFLISTLVLYIISLM. Residues 46–59 lie on the Mitochondrial matrix side of the membrane; it reads LTTKLTHTNTMDAQ. A helical transmembrane segment spans residues 60–87; sequence EVETVWTILPAIILIMIALPSLRILYMM. The Mitochondrial intermembrane segment spans residues 88–227; it reads DEINDPYLTV…QFESWTSSMT (140 aa). Cu cation-binding residues include His161, Cys196, Glu198, Cys200, His204, and Met207. Glu198 serves as a coordination point for Mg(2+).

Belongs to the cytochrome c oxidase subunit 2 family. In terms of assembly, component of the cytochrome c oxidase (complex IV, CIV), a multisubunit enzyme composed of 14 subunits. The complex is composed of a catalytic core of 3 subunits MT-CO1, MT-CO2 and MT-CO3, encoded in the mitochondrial DNA, and 11 supernumerary subunits COX4I, COX5A, COX5B, COX6A, COX6B, COX6C, COX7A, COX7B, COX7C, COX8 and NDUFA4, which are encoded in the nuclear genome. The complex exists as a monomer or a dimer and forms supercomplexes (SCs) in the inner mitochondrial membrane with NADH-ubiquinone oxidoreductase (complex I, CI) and ubiquinol-cytochrome c oxidoreductase (cytochrome b-c1 complex, complex III, CIII), resulting in different assemblies (supercomplex SCI(1)III(2)IV(1) and megacomplex MCI(2)III(2)IV(2)). Found in a complex with TMEM177, COA6, COX18, COX20, SCO1 and SCO2. Interacts with TMEM177 in a COX20-dependent manner. Interacts with COX20. Interacts with COX16. Requires Cu cation as cofactor.

Its subcellular location is the mitochondrion inner membrane. It catalyses the reaction 4 Fe(II)-[cytochrome c] + O2 + 8 H(+)(in) = 4 Fe(III)-[cytochrome c] + 2 H2O + 4 H(+)(out). Functionally, component of the cytochrome c oxidase, the last enzyme in the mitochondrial electron transport chain which drives oxidative phosphorylation. The respiratory chain contains 3 multisubunit complexes succinate dehydrogenase (complex II, CII), ubiquinol-cytochrome c oxidoreductase (cytochrome b-c1 complex, complex III, CIII) and cytochrome c oxidase (complex IV, CIV), that cooperate to transfer electrons derived from NADH and succinate to molecular oxygen, creating an electrochemical gradient over the inner membrane that drives transmembrane transport and the ATP synthase. Cytochrome c oxidase is the component of the respiratory chain that catalyzes the reduction of oxygen to water. Electrons originating from reduced cytochrome c in the intermembrane space (IMS) are transferred via the dinuclear copper A center (CU(A)) of subunit 2 and heme A of subunit 1 to the active site in subunit 1, a binuclear center (BNC) formed by heme A3 and copper B (CU(B)). The BNC reduces molecular oxygen to 2 water molecules using 4 electrons from cytochrome c in the IMS and 4 protons from the mitochondrial matrix. This Cratogeomys castanops (Yellow-faced pocket gopher) protein is Cytochrome c oxidase subunit 2 (MT-CO2).